The following is a 190-amino-acid chain: Lipid A acyltransferase PagP (190 aa).

Positions 1 to 18 are cleaved as a signal peptide; it reads MKRLISCLTIICALNASA. Catalysis depends on residues His-60, Asp-103, and Ser-104.

Belongs to the lipid A palmitoyltransferase family. As to quaternary structure, homodimer.

The protein localises to the cell outer membrane. It catalyses the reaction a lipid A + a 1,2-diacyl-sn-glycero-3-phosphocholine = a hepta-acyl lipid A + a 2-acyl-sn-glycero-3-phosphocholine. It carries out the reaction a lipid IVA + a 1,2-diacyl-sn-glycero-3-phosphocholine = a lipid IVB + a 2-acyl-sn-glycero-3-phosphocholine. The catalysed reaction is a lipid IIA + a 1,2-diacyl-sn-glycero-3-phosphocholine = a lipid IIB + a 2-acyl-sn-glycero-3-phosphocholine. Its function is as follows. Transfers a fatty acid residue from the sn-1 position of a phospholipid to the N-linked hydroxyfatty acid chain on the proximal unit of lipid A or its precursors. This chain is Lipid A acyltransferase PagP, found in Legionella pneumophila serogroup 1 (strain 2300/99 Alcoy).